We begin with the raw amino-acid sequence, 56 residues long: Small ribosomal subunit protein uS14 (56 aa).

Cys21, Cys24, Cys39, and Cys42 together coordinate Zn(2+).

It belongs to the universal ribosomal protein uS14 family. Zn(2+) serves as cofactor.

The chain is Small ribosomal subunit protein uS14 (RPS29) from Eremothecium gossypii (strain ATCC 10895 / CBS 109.51 / FGSC 9923 / NRRL Y-1056) (Yeast).